A 181-amino-acid chain; its full sequence is CDP-diacylglycerol--glycerol-3-phosphate 3-phosphatidyltransferase (181 aa).

Transmembrane regions (helical) follow at residues P8–I28, K35–A55, F64–L84, and I148–I168.

This sequence belongs to the CDP-alcohol phosphatidyltransferase class-I family.

It is found in the cell membrane. It catalyses the reaction a CDP-1,2-diacyl-sn-glycerol + sn-glycerol 3-phosphate = a 1,2-diacyl-sn-glycero-3-phospho-(1'-sn-glycero-3'-phosphate) + CMP + H(+). The protein operates within phospholipid metabolism; phosphatidylglycerol biosynthesis; phosphatidylglycerol from CDP-diacylglycerol: step 1/2. Functionally, this protein catalyzes the committed step to the synthesis of the acidic phospholipids. This chain is CDP-diacylglycerol--glycerol-3-phosphate 3-phosphatidyltransferase (pgsA), found in Rickettsia felis (strain ATCC VR-1525 / URRWXCal2) (Rickettsia azadi).